Here is a 292-residue protein sequence, read N- to C-terminus: MKIRVGSRESKLAVRQAQIVIDSIKKYNPDIEIELVTMKTTGDKILDKTIDKIGGKGLFVKELDRALLDGKVDITVHSFKDMPMDIDDRLPIVAVSKREDPRDVLVLPKGKNEIDFNGPIGCSSSRRKIQIEKIYPGCTVEPIRGNVLTRLEKLDKGEYSAIALAYAGLKRLGLEERIWRVFSTDEIVPAACQGIIAVQARKDFDASILANFHDKDSWDVSVAERSFIKALNGGCSSPSAAYGVIQGEKIVLTGFYVDKNGKIYKMTKTGDRNQGEALGYSLAMEMLKGADA.

Residue cysteine 235 is modified to S-(dipyrrolylmethanemethyl)cysteine.

Belongs to the HMBS family. In terms of assembly, monomer. Dipyrromethane is required as a cofactor.

It catalyses the reaction 4 porphobilinogen + H2O = hydroxymethylbilane + 4 NH4(+). It functions in the pathway porphyrin-containing compound metabolism; protoporphyrin-IX biosynthesis; coproporphyrinogen-III from 5-aminolevulinate: step 2/4. In terms of biological role, tetrapolymerization of the monopyrrole PBG into the hydroxymethylbilane pre-uroporphyrinogen in several discrete steps. The protein is Porphobilinogen deaminase of Acetivibrio thermocellus (strain ATCC 27405 / DSM 1237 / JCM 9322 / NBRC 103400 / NCIMB 10682 / NRRL B-4536 / VPI 7372) (Clostridium thermocellum).